We begin with the raw amino-acid sequence, 123 residues long: Ragulator complex protein LAMTOR3-A (123 aa).

It belongs to the LAMTOR3 family. As to quaternary structure, part of the Ragulator complex composed of lamtor1, lamtor2, lamtor3, lamtor4 and lamtor5. The Ragulator complex interacts with slc38a9; the probable amino acid sensor. Component of the lysosomal folliculin complex (LFC).

It is found in the late endosome membrane. Its function is as follows. As part of the Ragulator complex it is involved in amino acid sensing and activation of mTORC1, a signaling complex promoting cell growth in response to growth factors, energy levels, and amino acids. Activated by amino acids through a mechanism involving the lysosomal V-ATPase, the Ragulator plays a dual role for the small GTPases Rag (RagA/RRAGA, RagB/RRAGB, RagC/RRAGC and/or RagD/RRAGD): it (1) acts as a guanine nucleotide exchange factor (GEF), activating the small GTPases Rag and (2) mediates recruitment of Rag GTPases to the lysosome membrane. Activated Ragulator and Rag GTPases function as a scaffold recruiting mTORC1 to lysosomes where it is in turn activated. This is Ragulator complex protein LAMTOR3-A (lamtor3-a) from Xenopus laevis (African clawed frog).